A 239-amino-acid chain; its full sequence is MATPHINAEMGDFADVVLMPGDPLRAKYIAETFLEDAREVNNVRGMLGFTGTYKGRKISVMGHGMGIPSCSIYTKELITDFGVKKIIRVGSCGAVLPHVKLRDVVIGMGACTDSKVNRIRFKDHDFAAIADFDMVRNAVDAAKALGVDARVGNLFSADLFYSPDGEMFDVMEKYGILGVEMEAAGIYGVAAEFGAKALTICTVSDHIRTHEQTTAAERQTTFNDMIKIALESVLLGNKE.

Histidine 5 lines the a purine D-ribonucleoside pocket. Glycine 21 and arginine 25 together coordinate phosphate. An N6-acetyllysine modification is found at lysine 27. Residues arginine 44 and 88–91 each bind phosphate; that span reads RVGS. A purine D-ribonucleoside-binding positions include 180–182 and 204–205; these read EME and SD. Aspartate 205 functions as the Proton donor in the catalytic mechanism.

The protein belongs to the PNP/UDP phosphorylase family. In terms of assembly, homohexamer; trimer of homodimers.

It catalyses the reaction a purine D-ribonucleoside + phosphate = a purine nucleobase + alpha-D-ribose 1-phosphate. It carries out the reaction a purine 2'-deoxy-D-ribonucleoside + phosphate = a purine nucleobase + 2-deoxy-alpha-D-ribose 1-phosphate. Its function is as follows. Catalyzes the reversible phosphorolytic breakdown of the N-glycosidic bond in the beta-(deoxy)ribonucleoside molecules, with the formation of the corresponding free purine bases and pentose-1-phosphate. In Shigella dysenteriae serotype 1 (strain Sd197), this protein is Purine nucleoside phosphorylase DeoD-type.